A 261-amino-acid polypeptide reads, in one-letter code: [LysW]-aminoadipate/[LysW]-glutamate kinase (261 aa).

Residues Gly-35–Gly-36, Arg-62, and Asn-166 contribute to the substrate site.

It belongs to the acetylglutamate kinase family. LysZ subfamily.

The protein resides in the cytoplasm. The catalysed reaction is [amino-group carrier protein]-C-terminal-N-(1,4-dicarboxybutan-1-yl)-L-glutamine + ATP = [amino-group carrier protein]-C-terminal-N-(1-carboxy-5-phosphooxy-5-oxopentan-1-yl)-L-glutamine + ADP. It catalyses the reaction [amino-group carrier protein]-C-terminal-gamma-(L-glutamyl)-L-glutamate + ATP = [amino-group carrier protein]-C-terminal-gamma-(5-phospho-L-glutamyl)-L-glutamate + ADP. It functions in the pathway amino-acid biosynthesis; L-lysine biosynthesis via AAA pathway; L-lysine from L-alpha-aminoadipate (Thermus route): step 2/5. The protein operates within amino-acid biosynthesis; L-arginine biosynthesis. In terms of biological role, involved in both the arginine and lysine biosynthetic pathways. Phosphorylates the LysW-bound precursors glutamate (for arginine biosynthesis), respectively alpha-aminoadipate (for lysine biosynthesis). The polypeptide is [LysW]-aminoadipate/[LysW]-glutamate kinase (Sulfolobus acidocaldarius (strain ATCC 33909 / DSM 639 / JCM 8929 / NBRC 15157 / NCIMB 11770)).